The primary structure comprises 225 residues: MSTWFMFMFQESNSYYADNLISFHNMVMMIIIMISTLTVYIILDLFMNKFSNLFLLKNHNIEIIWTIIPIIILLIICFPSLKILYLIDEIVNPFFSIKSIGHQWYWSYEYPEFNNIEFDSYMLNYNNLNQFRLLETDNRMVIPMKIPLRLITTSTDVIHSWTVPSLGIKVDAVPGRINQLNLISKRPGIFFGQCSEICGMNHSFMPIMIESTSFQYFLNWVNKQI.

The Mitochondrial intermembrane segment spans residues 1-25 (MSTWFMFMFQESNSYYADNLISFHN). The helical transmembrane segment at 26 to 47 (MVMMIIIMISTLTVYIILDLFM) threads the bilayer. Residues 48–62 (NKFSNLFLLKNHNIE) are Mitochondrial matrix-facing. Residues 63–82 (IIWTIIPIIILLIICFPSLK) traverse the membrane as a helical segment. Residues 83–225 (ILYLIDEIVN…YFLNWVNKQI (143 aa)) are Mitochondrial intermembrane-facing. 6 residues coordinate Cu cation: H159, C194, E196, C198, H202, and M205. E196 contacts Mg(2+).

It belongs to the cytochrome c oxidase subunit 2 family. As to quaternary structure, component of the cytochrome c oxidase (complex IV, CIV), a multisubunit enzyme composed of a catalytic core of 3 subunits and several supernumerary subunits. The complex exists as a monomer or a dimer and forms supercomplexes (SCs) in the inner mitochondrial membrane with ubiquinol-cytochrome c oxidoreductase (cytochrome b-c1 complex, complex III, CIII). Cu cation is required as a cofactor.

The protein localises to the mitochondrion inner membrane. It catalyses the reaction 4 Fe(II)-[cytochrome c] + O2 + 8 H(+)(in) = 4 Fe(III)-[cytochrome c] + 2 H2O + 4 H(+)(out). Component of the cytochrome c oxidase, the last enzyme in the mitochondrial electron transport chain which drives oxidative phosphorylation. The respiratory chain contains 3 multisubunit complexes succinate dehydrogenase (complex II, CII), ubiquinol-cytochrome c oxidoreductase (cytochrome b-c1 complex, complex III, CIII) and cytochrome c oxidase (complex IV, CIV), that cooperate to transfer electrons derived from NADH and succinate to molecular oxygen, creating an electrochemical gradient over the inner membrane that drives transmembrane transport and the ATP synthase. Cytochrome c oxidase is the component of the respiratory chain that catalyzes the reduction of oxygen to water. Electrons originating from reduced cytochrome c in the intermembrane space (IMS) are transferred via the dinuclear copper A center (CU(A)) of subunit 2 and heme A of subunit 1 to the active site in subunit 1, a binuclear center (BNC) formed by heme A3 and copper B (CU(B)). The BNC reduces molecular oxygen to 2 water molecules using 4 electrons from cytochrome c in the IMS and 4 protons from the mitochondrial matrix. This is Cytochrome c oxidase subunit 2 (COII) from Apis mellifera ligustica (Common honeybee).